A 691-amino-acid chain; its full sequence is Pentatricopeptide repeat-containing protein ATP4, chloroplastic (691 aa).

A compositionally biased stretch (low complexity) spans 1–17; it reads MASLPLCRSPSSLLPSW. The N-terminal 35 residues, 1–35, are a transit peptide targeting the chloroplast; it reads MASLPLCRSPSSLLPSWPHRPISASFNPKNPSSPV. The disordered stretch occupies residues 1 to 76; sequence MASLPLCRSP…SSNTRFLWVN (76 aa). Polar residues predominate over residues 24-33; the sequence is ASFNPKNPSS. A compositionally biased stretch (pro residues) spans 45-56; the sequence is PPQPQDPSPPSD. Positions 61–76 are enriched in polar residues; the sequence is GTRPSSSSNTRFLWVN. PPR repeat units follow at residues 163-197, 198-232, 233-267, 268-302, 303-337, 338-372, 373-403, 411-445, 446-480, and 546-580; these read KVILYNVVLKLLRKKRLWSETEALWAEMLRDGVQP, DNATFSTVISCARACGLHSKAVEWFDKMPEFGCSP, DMLTYSAVIDAYGHAGNSEAALRLYDRARAEKWQL, DPVICSTVIKVHSTSGNFDGALNVFEEMKAIGVRP, NLVVYNTMLDAMGRALRPWVVKTIHREMVDQQVQP, SRATYCCLLHAYTRARYGEDAMAVYRLMKDEAMGI, DVMLYNMLLSMCADIGYVDEAEEIFRDMKAS, DSWSYSSMVTLYSSTANVLSAEGILNEMVEAGFKP, NIFVLTSLIRCYGKVGRTDDVVRSFGMLQDLGIIP, and KMPYCNCLMDLCVNLNQMEKACALLDAAQQLGIYA. The Smr domain occupies 592-677; the sequence is LHLRGLSVGA…WFLTTNVAAK (86 aa).

It belongs to the PPR family. P subfamily.

It localises to the plastid. The protein resides in the chloroplast stroma. Involved in translation and accumulation of chloroplast ATP synthase subunits. Interacts with the 5'-UTR of the chloroplast bicistronic atpB and atpE mRNA and activates its translation by facilitating ribosome association with the mRNA. Required for accumulation and activity of the chloroplast ATP synthase. Enhances atpA translation and is required for accumulation of specific processed atpF and psaJ transcripts. Required for the stabilization of bicistronic rpl16 and rpl14 mRNAs. The protein is Pentatricopeptide repeat-containing protein ATP4, chloroplastic of Zea mays (Maize).